The chain runs to 260 residues: Trans-aconitate 2-methyltransferase (260 aa).

It belongs to the methyltransferase superfamily. Tam family.

The protein localises to the cytoplasm. It catalyses the reaction trans-aconitate + S-adenosyl-L-methionine = (E)-3-(methoxycarbonyl)pent-2-enedioate + S-adenosyl-L-homocysteine. Functionally, catalyzes the S-adenosylmethionine monomethyl esterification of trans-aconitate. This is Trans-aconitate 2-methyltransferase from Paracidovorax citrulli (strain AAC00-1) (Acidovorax citrulli).